The chain runs to 183 residues: Hypoxanthine/guanine phosphoribosyltransferase (183 aa).

The protein belongs to the purine/pyrimidine phosphoribosyltransferase family. Archaeal HPRT subfamily. Homodimer.

It is found in the cytoplasm. The catalysed reaction is IMP + diphosphate = hypoxanthine + 5-phospho-alpha-D-ribose 1-diphosphate. The enzyme catalyses GMP + diphosphate = guanine + 5-phospho-alpha-D-ribose 1-diphosphate. The protein operates within purine metabolism; IMP biosynthesis via salvage pathway; IMP from hypoxanthine: step 1/1. Catalyzes a salvage reaction resulting in the formation of IMP that is energically less costly than de novo synthesis. In Methanocaldococcus jannaschii (strain ATCC 43067 / DSM 2661 / JAL-1 / JCM 10045 / NBRC 100440) (Methanococcus jannaschii), this protein is Hypoxanthine/guanine phosphoribosyltransferase.